Consider the following 754-residue polypeptide: Ribonucleoside-diphosphate reductase subunit alpha (754 aa).

Residues 4–93 (INVIKSSGVS…MFALRKHVYG (90 aa)) enclose the ATP-cone domain. Residues Thr206, 221-222 (SC), Gly250, 435-439 (NLCCE), and 615-619 (PCESS) each bind substrate. Cysteines 222 and 457 form a disulfide. The active-site Proton acceptor is the Asn435. The active-site Cysteine radical intermediate is Cys437. Residue Glu439 is the Proton acceptor of the active site. The disordered stretch occupies residues 621–641 (QVSNSTNGYEPPRGPVSVKES).

Belongs to the ribonucleoside diphosphate reductase large chain family. Heterodimer of a large and a small subunit.

The catalysed reaction is a 2'-deoxyribonucleoside 5'-diphosphate + [thioredoxin]-disulfide + H2O = a ribonucleoside 5'-diphosphate + [thioredoxin]-dithiol. With respect to regulation, under complex allosteric control mediated by deoxynucleoside triphosphates and ATP binding. The type of nucleotide bound at the specificity site determines substrate preference. It seems probable that ATP makes the enzyme reduce CDP and UDP, dGTP favors ADP reduction and dTTP favors GDP reduction. In terms of biological role, provides the precursors necessary for DNA synthesis. Catalyzes the biosynthesis of deoxyribonucleotides from the corresponding ribonucleotides. This chain is Ribonucleoside-diphosphate reductase subunit alpha (NRDA), found in Escherichia coli (Bacteriophage T4).